Here is a 37-residue protein sequence, read N- to C-terminus: Large ribosomal subunit protein bL36 (37 aa).

It belongs to the bacterial ribosomal protein bL36 family.

The sequence is that of Large ribosomal subunit protein bL36 from Francisella tularensis subsp. tularensis (strain FSC 198).